The sequence spans 173 residues: Lens fiber membrane intrinsic protein (173 aa).

At 1–3 the chain is on the cytoplasmic side; that stretch reads MYS. A helical membrane pass occupies residues 4-24; it reads FMGGGLFCAWVGTILLVVAMA. The Extracellular segment spans residues 25-66; it reads TDHWMQYRLSGSFAHQGLWRYCLGNKCYLQTDSIAYWNATRA. 2 C-linked (Man) tryptophan glycosylation sites follow: W43 and W61. N-linked (GlcNAc...) asparagine glycosylation occurs at N62. Residues 67–87 form a helical membrane-spanning segment; it reads FMILSALCAISGIIMGIMAFA. Residues 88–98 are Cytoplasmic-facing; sequence HQPTFSRISRP. Residues 99–119 form a helical membrane-spanning segment; sequence FSAGIMFFSSTLFVVLALAIY. The Extracellular segment spans residues 120-140; it reads TGVTVSFLGRRFGDWRFSWSY. A helical transmembrane segment spans residues 141-161; the sequence is ILGWVAVLMTFFAGIFYMCAY. Topologically, residues 162–173 are cytoplasmic; it reads RVHECRRLSTPR. S170 is subject to Phosphoserine. Phosphothreonine is present on T171.

The protein belongs to the PMP-22/EMP/MP20 family. As to quaternary structure, seems to be associated with itself or another lens membrane component via disulfide bonds. In terms of tissue distribution, eye lens specific.

It is found in the membrane. Present in the thicker 16-17 nm junctions of mammalian lens fiber cells, where it may contribute to cell junctional organization. Acts as a receptor for calmodulin. May play an important role in both lens development and cataractogenesis. The sequence is that of Lens fiber membrane intrinsic protein (LIM2) from Homo sapiens (Human).